The sequence spans 184 residues: UPF0397 protein SAOUHSC_03020 (184 aa).

The next 5 helical transmembrane spans lie at 11 to 31 (VVAI…VVIP), 44 to 64 (AFLA…TGLV), 77 to 97 (AWWS…WIGL), 116 to 136 (IGQI…LDIL), and 148 to 168 (QGVI…TILL).

Belongs to the UPF0397 family.

The protein localises to the cell membrane. The polypeptide is UPF0397 protein SAOUHSC_03020 (Staphylococcus aureus (strain NCTC 8325 / PS 47)).